The chain runs to 256 residues: Type III pantothenate kinase (256 aa).

6–13 (DVGNSNIV) contributes to the ATP binding site. Substrate is bound by residues tyrosine 100 and 107 to 110 (GADR). Aspartate 109 acts as the Proton acceptor in catalysis. Aspartate 129 is a K(+) binding site. An ATP-binding site is contributed by threonine 132. Threonine 184 serves as a coordination point for substrate.

Belongs to the type III pantothenate kinase family. In terms of assembly, homodimer. It depends on NH4(+) as a cofactor. The cofactor is K(+).

The protein localises to the cytoplasm. The enzyme catalyses (R)-pantothenate + ATP = (R)-4'-phosphopantothenate + ADP + H(+). The protein operates within cofactor biosynthesis; coenzyme A biosynthesis; CoA from (R)-pantothenate: step 1/5. Functionally, catalyzes the phosphorylation of pantothenate (Pan), the first step in CoA biosynthesis. In Geotalea uraniireducens (strain Rf4) (Geobacter uraniireducens), this protein is Type III pantothenate kinase.